Here is a 145-residue protein sequence, read N- to C-terminus: D-aminoacyl-tRNA deacylase (145 aa).

Residues 137 to 138 carry the Gly-cisPro motif, important for rejection of L-amino acids motif; it reads GP.

This sequence belongs to the DTD family. In terms of assembly, homodimer.

The protein resides in the cytoplasm. It catalyses the reaction glycyl-tRNA(Ala) + H2O = tRNA(Ala) + glycine + H(+). The enzyme catalyses a D-aminoacyl-tRNA + H2O = a tRNA + a D-alpha-amino acid + H(+). In terms of biological role, an aminoacyl-tRNA editing enzyme that deacylates mischarged D-aminoacyl-tRNAs. Also deacylates mischarged glycyl-tRNA(Ala), protecting cells against glycine mischarging by AlaRS. Acts via tRNA-based rather than protein-based catalysis; rejects L-amino acids rather than detecting D-amino acids in the active site. By recycling D-aminoacyl-tRNA to D-amino acids and free tRNA molecules, this enzyme counteracts the toxicity associated with the formation of D-aminoacyl-tRNA entities in vivo and helps enforce protein L-homochirality. This chain is D-aminoacyl-tRNA deacylase, found in Citrobacter koseri (strain ATCC BAA-895 / CDC 4225-83 / SGSC4696).